The chain runs to 209 residues: Small ribosomal subunit protein eS1 (209 aa).

It belongs to the eukaryotic ribosomal protein eS1 family.

This Picrophilus torridus (strain ATCC 700027 / DSM 9790 / JCM 10055 / NBRC 100828 / KAW 2/3) protein is Small ribosomal subunit protein eS1.